The primary structure comprises 1393 residues: DNA-directed RNA polymerase subunit beta' (1393 aa).

The Zn(2+) site is built by Cys72, Cys74, Cys87, and Cys90. Asp463, Asp465, and Asp467 together coordinate Mg(2+). Zn(2+) contacts are provided by Cys812, Cys887, Cys894, and Cys897.

Belongs to the RNA polymerase beta' chain family. In terms of assembly, the RNAP catalytic core consists of 2 alpha, 1 beta, 1 beta' and 1 omega subunit. When a sigma factor is associated with the core the holoenzyme is formed, which can initiate transcription. Mg(2+) is required as a cofactor. Zn(2+) serves as cofactor.

It catalyses the reaction RNA(n) + a ribonucleoside 5'-triphosphate = RNA(n+1) + diphosphate. DNA-dependent RNA polymerase catalyzes the transcription of DNA into RNA using the four ribonucleoside triphosphates as substrates. This chain is DNA-directed RNA polymerase subunit beta', found in Chlamydia abortus (strain DSM 27085 / S26/3) (Chlamydophila abortus).